The chain runs to 2513 residues: MDSVYVDIDADSAFLKALQRAYPMFEVEPKQVTPNDHANARAFSHLAIKLIEQEIDPDSTILDIGPAPARRMMSDRKYHCVCPMRSAEDPERLANYARKLASAAGKVTDKNISGKINDLQAVMAVPNMETSTFCLHTDATCKQRGDVAIYQDVYAVHAPTSLYHQAIKGVRVAYWIGFDTTPFMYNAMAGAYPSYSTNWADEQVLKAKNIGLCSTDLSEGRRGKLSIMRGKKLKPCDRVLFSVGSTLYPESRKLLQSWHLPSVFHLKGKLSFTCRCDTIVSCEGYVVKRVTMSPGIYGKTSGYAVTHHADGFLMCKTTDTVDGERVSFSVCTYVPATICDQMTGILATEVTPEDAQKLLVGLNQRIVVNGRTQRNTNTMKNYLLPIVAQAFSKWAKECRKDMEDEKLLGVRERTLTCCCLWAFRKHKTHTVYKRPDTQSIQKVPAEFDSFVIPSLWSSGLSIPLRTRIKWLLSKAPKHEQLPHSGNAEEAAQAEMDAAEEREAELTREAMPPLQATQDDVQVEIDVEQLEDRAGAGIVETPRGAIKVTAQPSDRVVGEYLVLTPQAVLRSQKLSLIHALAEQVKTCTHSGRAGRYAVEAYDGRVLVPSGYAIPQEDFQSLSESATMVFNEREFVNRKLHHIAMHGPALNTDEESYELVRVEKTEHEYVYDVDQKKCCKREEATGLVLVGDLTSPPYHEFAYEGLKIRPACPYKTAVIGVFGVPGSGKSAIIKNLVTRQDLVTSGKKENCQEISNDVMRQRKLEISARTVDSLLLNGCNKPVEVLYVDEAFACHSGTLLALIAMVRPRQKVVLCGDPKQCGFFNMMQMKVNYNHNICTQVYHKSISRRCTLPVTAIVSSLHYESKMRTTNEYNQPIVVDTTGITKPEPGDLVLTCFRGWVKQLQIDYRGNEVMTAAASQGLTRKGVYAVRQKVNENPLYASTSEHVNVLLTRTEGKLIWKTLSGDPWIKILQNPPKGNFKATIKEWEAEHASIMAGICNHQMAFDTFQNKANVCWAKCLVPILDTAGIKLSDRQWSQIVQAFKEDRAYSPEVALNEICTRIYGVDLDSGLFSKPLISVYYADNHWDNRPGGKMFGFNPEVALMLEKKYPFTKGKWNINKQICITTRKVDEFNPETNIIPANRRLPHSLVAEHHTVRGERMEWLVNKINGHHMLLVSGYNLILPTKRVTWVAPLGTRGADYTYNLELGLPATLGRYDLVVINIHTPFRIHHYQQCVDHAMKLQMLGGDSLRLLKPGGSLLIRAYGYADRTSERVISVLGRKFRSSRALKPQCITSNTEMFFLFSRFDNGRRNFTTHVMNNQLNAVYAGLATRAGCAPSYRVKRMDIAKNTEECVVNAANPRGVPGDGVCKAVYRKWPESFRNSATPVGTAKTIMCGQYPVIHAVGPNFSNYSEAEGDRELASVYREVAKEVSRLGVSSVAIPLLSTGVYSGGKDRLLQSLNHLFTAMDSTDADVVIYCRDKEWEKKITEAISLRSQVELLDDHISVDCDIVRVHPDSSLAGRKGYSTVEGALYSYLEGTRFHQTAVDMAEIYTMWPKQTEANEQVCLYALGESIESVRQKCPVDDADASFPPKTVPCLCRYAMTPERVARLRMNHTTSIIVCSSFPLPKYKIEGVQKVKCSKALLFDHNVPSRVSPRTYRPADEIIQTPQIPTEACQDAQFVQSITDEAVPVPSDLEACDATMDWPSIDIVPTRQRSDSFDSEYSSRSNIQLVTADVHAPMYANSLASSGGSVLSLSSEQAQNGIMILPDSEDTDSISRVSTPIAPPRRRLGRTINVTCDEREGKILPMASDRLFTAKPYTVALGVSTADITAYPIQAPLGSTQPPALEQITFGDFAEGEIDNLLTGALTFGDFEPGEVEELTDSEWSTCSDTDEELXLDRAGGYIFSSDTGQGHLQQKSVRQTTLPVNIVEEVHEEKCYPPKLDEIKEQLLLKRLQESASTANRSRYQSRKVENMKATIIHRLKEGCRLYLASDTPRVPSYRITYPAPVYSPSISIKLNNPETAVAVCNEFLARNYPTVASYQVTDEYDAYLDMVDGSESCLDRATFNPSKLRSYPKQHSYHAPTIRSAVPSPFQNTLQNVLAAATKRNCNVTQMRELPTMDSAVFNVECFKKYACNQEYWREFASSPIRVTTENLTMYVTKLKGPKAAALFAKTHNLLPLQEVPMDRFTMDMKRDVKVTPGTKHTEERPKVQVIQAAEPLATAYLCGIHRELVRRLNAVLLPNVHTLFDMSAEDFDAIISTHFKPGDAVLETDIASFDKSQDDSLALTAMMLLEDLGVDQPILDLIEAAFGEISSCHLPTGTRFKFGAMMKSGMFLTLFVNTLLNITIASRVLEERLTTSACAAFIGDDNIIHGVVSDALMAARCATWMNMEVKIIDAVVSEKAPYFCGGFILHDTVTGTSCRVADPLKRLFKLGKPLAAGDEQDEDRRRALADEVTRWQRTGLITELEKAVYSRYEVQGITAVITSMATFASSKENFKKLRGPVVTLYGGPK.

One can recognise an Alphavirus-like MT domain in the interval 28-259 (EPKQVTPNDH…ESRKLLQSWH (232 aa)). Residues 244 to 263 (GSTLYPESRKLLQSWHLPSV) form a nsP1 membrane-binding region. Residues Cys417 and Cys419 are each lipidated (S-palmitoyl cysteine; by host). The 153-residue stretch at 690–842 (DLTSPPYHEF…HNICTQVYHK (153 aa)) folds into the (+)RNA virus helicase ATP-binding domain. 721–728 (GVPGSGKS) is a binding site for a ribonucleoside 5'-triphosphate. A (+)RNA virus helicase C-terminal domain is found at 843–991 (SISRRCTLPV…IKEWEAEHAS (149 aa)). One can recognise a Peptidase C9 domain in the interval 1004–1327 (DTFQNKANVC…NQLNAVYAGL (324 aa)). The tract at residues 1005–1024 (TFQNKANVCWAKCLVPILDT) is nucleolus localization signal. Cys1013 acts as the For cysteine protease nsP2 activity in catalysis. A Nuclear export signal motif is present at residues 1058–1067 (TRIYGVDLDS). His1083 serves as the catalytic For cysteine protease nsP2 activity. The short motif at 1182–1186 (PTKRV) is the Nuclear localization signal element. Residues Asp1343, Asn1357, Gly1365, Gly1445, Val1446, and Tyr1447 each coordinate ADP-D-ribose. Zn(2+)-binding residues include Cys1595, Cys1597, Cys1620, and Cys1638. 2 consecutive short sequence motifs (FGDF; binding to host G3BP1) follow at residues 1851–1854 (FGDF) and 1869–1872 (FGDF). Positions 2267–2382 (DAVLETDIAS…HGVVSDALMA (116 aa)) constitute a RdRp catalytic domain.

In terms of assembly, interacts with non-structural protein 3. Interacts with RNA-directed RNA polymerase nsP4. Interacts with protease nsP2. interacts with itself. Interacts with mRNA-capping enzyme nsP1. Interacts with host DDX1. Interacts with host DDX3. Interacts (via C-terminus) with host G3BP1; this interaction inhibits the formation of host stress granules on viral mRNAs and the nsp3-G3BP1 complexes bind viral RNAs and probably orchestrate the assembly of viral replication complexes. Interacts (via C-terminus) with host G3BP2; this interaction inhibits the formation of host stress granules on viral mRNAs and the nsp3-G3BP2 complexes bind viral RNAs and probably orchestrate the assembly of viral replication complexes. As to quaternary structure, interacts with mRNA-capping enzyme nsP1. Interacts with protease nsP2. interacts with itself. In terms of assembly, interacts with RNA-directed RNA polymerase nsP4. Interacts with mRNA-capping enzyme nsP1. Interacts with KPNA1/karyopherin-alpha1; this interaction probably allows the active transport of protease nsP2 into the host nucleus. Mg(2+) serves as cofactor. Requires Mn(2+) as cofactor. Specific enzymatic cleavages in vivo yield mature proteins. The processing of the polyprotein is temporally regulated. In early stages (1.7 hpi), P1234 is first cleaved in trans through its nsP2 protease activity, releasing P123' and nsP4, which associate to form the early replication complex. At the same time, P1234 is also cut at the nsP1/nsP2 site early in infection but with lower efficiency. After replication of the viral minus-strand RNAs (4 hpi), the polyproteins are cut at the nsP1/nsP2 and nsP2/nsP3 sites very efficiently, preventing accumulation of P123' and P1234 and allowing the formation of the late replication complex. NsP3'/nsP4 site is not cleaved anymore and P34 is produced rather than nsP4. Post-translationally, specific enzymatic cleavages in vivo yield mature proteins. The processing of the polyprotein is temporally regulated. In early stages (1.7 hpi), P123 is cleaved at the nsP1/nsP2 site with low efficiency. After replication of the viral minus-strand RNAs (4 hpi), the polyproteins are cut at the nsP1/nsP2 and nsP2/nsP3 sites very efficiently, preventing accumulation of P123 and allowing the formation of the late replication complex. In terms of processing, specific enzymatic cleavages in vivo yield mature proteins. The processing of the polyprotein is temporally regulated. In early stages (1.7 hpi), P123 is cleaved at the nsP1/nsP2 site with low efficiency. After replication of the viral minus-strand RNAs (4 hpi), the polyproteins are cut at the nsP1/nsP2 and nsP2/nsP3 sites very efficiently, preventing accumulation of P123' and allowing the formation of the late replication complex. Palmitoylated by host palmitoyltransferases ZDHHC2 and ZDHHC19. Post-translationally, phosphorylated by host on serines and threonines. In terms of processing, ubiquitinated; targets the protein for rapid degradation via the ubiquitin system. Nsp4 is present in extremely low quantities due to low frequency of translation through the amber stop-codon and the degradation by the ubiquitin pathway.

The protein localises to the host cytoplasmic vesicle membrane. The protein resides in the host cell membrane. It localises to the host cell projection. Its subcellular location is the host filopodium. It is found in the host nucleus. The protein localises to the host cytoplasm. The catalysed reaction is GTP + S-adenosyl-L-methionine = N(7)-methyl-GTP + S-adenosyl-L-homocysteine. It carries out the reaction N(7)-methyl-GTP + L-histidyl-[protein] = N(tele)-(N(7)-methylguanosine 5'-phospho)-L-histidyl-[protein] + diphosphate. The enzyme catalyses N(tele)-(N(7)-methylguanosine 5'-phospho)-L-histidyl-[protein] + a 5'-end diphospho-(purine-ribonucleoside) in mRNA + H(+) = a 5'-end (N(7)-methyl 5'-triphosphoguanosine)-(purine-ribonucleoside) in mRNA + L-histidyl-[protein]. It catalyses the reaction a 5'-end triphospho-ribonucleoside in mRNA + H2O = a 5'-end diphospho-ribonucleoside in mRNA + phosphate + H(+). The catalysed reaction is a ribonucleoside 5'-triphosphate + H2O = a ribonucleoside 5'-diphosphate + phosphate + H(+). It carries out the reaction ATP + H2O = ADP + phosphate + H(+). The enzyme catalyses RNA(n) + a ribonucleoside 5'-triphosphate = RNA(n+1) + diphosphate. It catalyses the reaction 4-O-(ADP-D-ribosyl)-L-aspartyl-[protein] + H2O = L-aspartyl-[protein] + ADP-D-ribose + H(+). The catalysed reaction is 5-O-(ADP-D-ribosyl)-L-glutamyl-[protein] + H2O = L-glutamyl-[protein] + ADP-D-ribose + H(+). It carries out the reaction RNA(n) + ATP = RNA(n)-3'-adenine ribonucleotide + diphosphate. The enzyme catalyses ADP-alpha-D-ribose 1''-phosphate + H2O = ADP-D-ribose + phosphate. Its function is as follows. Inactive precursor of the viral replicase, which is activated by cleavages carried out by the viral protease nsP2. The early replication complex formed by the polyprotein P123' and nsP4 synthesizes minus-strand RNAs. Polyprotein P123' is a short-lived polyprotein that accumulates during early stage of infection. As soon P123' is cleaved into mature proteins, the plus-strand RNAs synthesis begins. Functionally, the early replication complex formed by the polyprotein P123 and nsP4 synthesizes minus-strand RNAs. As soon P123 is cleaved into mature proteins, the plus-strand RNAs synthesis begins. In terms of biological role, cytoplasmic capping enzyme that catalyzes two virus-specific reactions: methyltransferase and nsP1 guanylyltransferase. mRNA-capping is necessary since all viral RNAs are synthesized in the cytoplasm, and host capping enzymes are restricted to the nucleus. The enzymatic reaction involves a covalent link between 7-methyl-GMP and nsP1, whereas eukaryotic capping enzymes form a covalent complex only with GMP. nsP1 capping consists in the following reactions: GTP is first methylated into 7-methyl-GMP and then is covalently linked to nsP1 to form the m7GMp-nsP1 complex from which 7-methyl-GMP complex is transferred to the mRNA to create the cap structure. NsP1 is also needed for the initiation of the minus-strand RNAs synthesis. Probably serves as a membrane anchor for the replication complex composed of nsP1-nsP4. Palmitoylated nsP1 is remodeling host cell cytoskeleton, and induces filopodium-like structure formation at the surface of the host cell. Its function is as follows. Multifunctional protein whose N-terminus is part of the RNA polymerase complex and displays NTPase, RNA triphosphatase and helicase activities. NTPase and RNA triphosphatase are involved in viral RNA capping and helicase keeps a check on the dsRNA replication intermediates. The C-terminus harbors a protease that specifically cleaves the polyproteins and releases the mature proteins. Required for the shutoff of minus-strand RNAs synthesis. Specifically inhibits the host IFN response by promoting the nuclear export of host STAT1. Also inhibits host transcription by inducing the rapid proteasome-dependent degradation of POLR2A, a catalytic subunit of the RNAPII complex. The resulting inhibition of cellular protein synthesis serves to ensure maximal viral gene expression and to evade host immune response. Seems to be essential for minus-strand RNAs and subgenomic 26S mRNAs synthesis. Displays mono-ADP-ribosylhydrolase activity. ADP-ribosylation is a post-translational modification that controls various processes of the host cell and the virus probably needs to revert it for optimal viral replication. Binds proteins of FXR family and sequesters them into the viral RNA replication complexes thereby inhibiting the formation of host stress granules on viral mRNAs. The nsp3'-FXR complexes bind viral RNAs and probably orchestrate the assembly of viral replication complexes, thanks to the ability of FXR family members to self-assemble and bind DNA. Functionally, seems to be essential for minus-strand RNAs and subgenomic 26S mRNAs synthesis. Displays mono-ADP-ribosylhydrolase activity. ADP-ribosylation is a post-translational modification that controls various processes of the host cell and the virus probably needs to revert it for optimal viral replication. Binds proteins of G3BP family and sequesters them into the viral RNA replication complexes thereby inhibiting the formation of host stress granules on viral mRNAs. The nsp3-G3BP complexes bind viral RNAs and probably orchestrate the assembly of viral replication complexes, thanks to the ability of G3BP family members to self-assemble and bind DNA. In terms of biological role, RNA dependent RNA polymerase. Replicates genomic and antigenomic RNA by recognizing replications specific signals. The early replication complex formed by the polyprotein P123 and nsP4 synthesizes minus-strand RNAs. The late replication complex composed of fully processed nsP1-nsP4 is responsible for the production of genomic and subgenomic plus-strand RNAs. The chain is Polyprotein P1234 from Anopheles (Human).